The sequence spans 122 residues: MIQQESRLKVADNTGAKEILAIRVLGGSGRRYAGIGDVIVATVKDAIPGGNVKKGDVVKAVIVRTKKERRRADGSYIKFDENAAVILKNDGDPRGTRIFGPVGRELRDKKFMKIISLAPEVL.

The protein belongs to the universal ribosomal protein uL14 family. Part of the 50S ribosomal subunit. Forms a cluster with proteins L3 and L19. In the 70S ribosome, L14 and L19 interact and together make contacts with the 16S rRNA in bridges B5 and B8.

In terms of biological role, binds to 23S rRNA. Forms part of two intersubunit bridges in the 70S ribosome. This Renibacterium salmoninarum (strain ATCC 33209 / DSM 20767 / JCM 11484 / NBRC 15589 / NCIMB 2235) protein is Large ribosomal subunit protein uL14.